Here is a 226-residue protein sequence, read N- to C-terminus: Probable transcriptional regulator RABBIT EARS (226 aa).

Residues 55 to 77 (YSCSFCGREFKSAQALGGHMNVH) form a C2H2-type zinc finger. The tract at residues 80–102 (DRARLKQQSLSPSSTDQATPPEC) is disordered. Residues 85–97 (KQQSLSPSSTDQA) are compositionally biased toward polar residues. The EAR-like (transcriptional repression) motif lies at 212–216 (LDLEL).

As to expression, strongly expressed in inflorescences and flowers, and weakly in siliques, seedlings and roots. In flowers, it is expressed in petal primordia and their precursor cells. Also expressed in the lateral root caps and the basal cells of lateral roots.

The protein resides in the nucleus. Functionally, probable transcriptional regulator essential for petal development. Required for the early development of the organ primordia of the second whorl. Acts downstream of AP1 and PTL. This is Probable transcriptional regulator RABBIT EARS (RBE) from Arabidopsis thaliana (Mouse-ear cress).